Reading from the N-terminus, the 574-residue chain is ATP-dependent lipid A-core flippase (574 aa).

4 helical membrane passes run 11-31 (LLSY…GFGI), 60-80 (WFPL…FMGG), 156-176 (YTNW…GVLV), and 244-264 (LNSP…VWLA). Residues 23–304 (LLVLVGFGIN…LTDVNEKLQR (282 aa)) enclose the ABC transmembrane type-1 domain. One can recognise an ABC transporter domain in the interval 335-570 (VRFDHVTLEY…QGAYFQLHQR (236 aa)). 368-375 (GRSGAGKT) is a binding site for ATP.

Belongs to the ABC transporter superfamily. Lipid exporter (TC 3.A.1.106) family. Homodimer.

It is found in the cell inner membrane. The enzyme catalyses ATP + H2O + lipid A-core oligosaccharideSide 1 = ADP + phosphate + lipid A-core oligosaccharideSide 2.. Its function is as follows. Involved in lipopolysaccharide (LPS) biosynthesis. Translocates lipid A-core from the inner to the outer leaflet of the inner membrane. Transmembrane domains (TMD) form a pore in the inner membrane and the ATP-binding domain (NBD) is responsible for energy generation. The chain is ATP-dependent lipid A-core flippase from Acinetobacter baylyi (strain ATCC 33305 / BD413 / ADP1).